A 207-amino-acid polypeptide reads, in one-letter code: Guanylate kinase (207 aa).

The Guanylate kinase-like domain maps to 4–184 (GLLFIVSAPS…AVSDLYKIIR (181 aa)). Residue 11 to 18 (APSGTGKS) participates in ATP binding.

Belongs to the guanylate kinase family.

It is found in the cytoplasm. The catalysed reaction is GMP + ATP = GDP + ADP. Essential for recycling GMP and indirectly, cGMP. The polypeptide is Guanylate kinase (Buchnera aphidicola subsp. Baizongia pistaciae (strain Bp)).